The primary structure comprises 128 residues: Large ribosomal subunit protein bL17 (128 aa).

This sequence belongs to the bacterial ribosomal protein bL17 family. Part of the 50S ribosomal subunit. Contacts protein L32.

This Streptococcus equi subsp. equi (strain 4047) protein is Large ribosomal subunit protein bL17.